Here is a 214-residue protein sequence, read N- to C-terminus: Probable GTP-binding protein EngB (214 aa).

An EngB-type G domain is found at 40 to 212 (SLPEIVFVGK…KASFAQCIKH (173 aa)). GTP is bound by residues 48–55 (GKSNVGKS), 75–79 (GRTRQ), 93–96 (DLPG), 160–163 (TKSD), and 191–193 (VSS). Residues S55 and T77 each contribute to the Mg(2+) site.

Belongs to the TRAFAC class TrmE-Era-EngA-EngB-Septin-like GTPase superfamily. EngB GTPase family. Mg(2+) is required as a cofactor.

Necessary for normal cell division and for the maintenance of normal septation. The polypeptide is Probable GTP-binding protein EngB (Rickettsia prowazekii (strain Madrid E)).